The chain runs to 748 residues: tRNA endonuclease ANKZF1 (748 aa).

A C2H2-type zinc finger spans residues 96 to 120 (LFCSACDQIFQNHQEQREHYKLDWH). Residues 135–185 (SASDFEQQSSTGDLSSISGSDDTDSSSEEDLLPLDEGRAESEKPNRPPGFY) form a disordered region. Residues 143 to 154 (SSTGDLSSISGS) show a composition bias toward low complexity. Residues 155-167 (DDTDSSSEEDLLP) are compositionally biased toward acidic residues. A compositionally biased stretch (basic and acidic residues) spans 169–179 (DEGRAESEKPN). The 144-residue stretch at 227–370 (GPRYYVVLMA…QRVLHKLTTL (144 aa)) folds into the VLRF1 domain. The active site involves Gln270. 2 positions are modified to phosphoserine: Ser282 and Ser385. Basic and acidic residues predominate over residues 383–408 (FHSPETHWKPVREERKKDTEKEKTKV). Disordered regions lie at residues 383–438 (FHSP…SEVE) and 460–497 (RRRR…TQEV). Residues 429–438 (SQEEDGSEVE) show a composition bias toward acidic residues. Positions 484 to 497 (QPQDEPFSQPTQEV) are enriched in polar residues. An ANK 1 repeat occupies 515 to 545 (ELWDTLLAACRAGEVEVLKLQLATGLVDPGV). The residue at position 555 (Ser555) is a Phosphoserine. An ANK 2 repeat occupies 556-585 (GGFTLLHAAAAAGRGLVVRLLLEAGADPTV). The segment at 621 to 677 (KARVPGPLTQEMEARQATRKKEQKAARRQREQQQRKQREQEEQEQEEQRRFAALSDR) is disordered. Positions 628 to 681 (LTQEMEARQATRKKEQKAARRQREQQQRKQREQEEQEQEEQRRFAALSDREKRA) form a coiled coil. Residue Thr629 is modified to Phosphothreonine. Residues 632 to 677 (MEARQATRKKEQKAARRQREQQQRKQREQEEQEQEEQRRFAALSDR) are compositionally biased toward basic and acidic residues. A VCP/p97-interacting motif (VIM) region spans residues 654 to 666 (QRKQREQEEQEQE). Ser702 carries the post-translational modification Phosphoserine.

Belongs to the ANKZF1/VMS1 family. In terms of assembly, interacts (via VIM motif) with VCP.

It localises to the cytoplasm. In terms of biological role, endonuclease that cleaves polypeptidyl-tRNAs downstream of the ribosome-associated quality control (RQC) pathway to release incompletely synthesized polypeptides for degradation. The RQC pathway disassembles aberrantly stalled translation complexes to recycle or degrade the constituent parts. ANKZF1 acts downstream disassembly of stalled ribosomes and specifically cleaves off the terminal 3'-CCA nucleotides universal to all tRNAs from polypeptidyl-tRNAs, releasing (1) ubiquitinated polypeptides from 60S ribosomal subunit for degradation and (2) cleaved tRNAs. ANKZF1-cleaved tRNAs are then repaired and recycled by ELAC1 and TRNT1. Also plays a role in the cellular response to hydrogen peroxide and in the maintenance of mitochondrial integrity under conditions of cellular stress. This is tRNA endonuclease ANKZF1 from Mus musculus (Mouse).